We begin with the raw amino-acid sequence, 64 residues long: MAKHLVDIDEQALNMARTELGTTTIKDTVNAALRQATSQRVQRVAAALDTLAAAPPEDRAEAWR.

In terms of biological role, possibly the antitoxin component of a type II toxin-antitoxin (TA) system. Its cognate toxin is VapC51. This chain is Putative antitoxin VapB51, found in Mycobacterium tuberculosis (strain ATCC 25618 / H37Rv).